The sequence spans 248 residues: Isoprenyl transferase (248 aa).

Residue Asp-23 is part of the active site. Mg(2+) is bound at residue Asp-23. Substrate contacts are provided by residues 24–27 (GNGR), Trp-28, Arg-36, His-40, and 68–70 (STE). Residue Asn-71 is the Proton acceptor of the active site. Substrate contacts are provided by residues Trp-72, Arg-74, Arg-185, and 191–193 (RIS). A Mg(2+)-binding site is contributed by Glu-204.

It belongs to the UPP synthase family. As to quaternary structure, homodimer. Requires Mg(2+) as cofactor.

Functionally, catalyzes the condensation of isopentenyl diphosphate (IPP) with allylic pyrophosphates generating different type of terpenoids. In Neisseria gonorrhoeae (strain ATCC 700825 / FA 1090), this protein is Isoprenyl transferase.